The chain runs to 618 residues: Chaperone protein HtpG (618 aa).

The a; substrate-binding stretch occupies residues 1–331 (MAKHTFQTEV…SEDLPLNVSR (331 aa)). A b region spans residues 332 to 541 (EILQQNRILA…EDDPNFAMIK (210 aa)). Residues 542–618 (MMRQMGNALG…RLNAMLERAI (77 aa)) form a c region.

Belongs to the heat shock protein 90 family. In terms of assembly, homodimer.

It is found in the cytoplasm. Molecular chaperone. Has ATPase activity. The protein is Chaperone protein HtpG of Wolinella succinogenes (strain ATCC 29543 / DSM 1740 / CCUG 13145 / JCM 31913 / LMG 7466 / NCTC 11488 / FDC 602W) (Vibrio succinogenes).